Here is a 485-residue protein sequence, read N- to C-terminus: Hemolysin (485 aa).

Positions 1-28 (MKNFKGRKFLTCVLVSLCTLNYSSISFA) are cleaved as a signal peptide. The next 4 beta stranded transmembrane spans lie at 196 to 209 (KAQI…NAKY), 216 to 225 (IDFNAVANGE), 294 to 303 (SKDVQAAFKA), and 311 to 323 (ETSG…FEES). The Conserved undecapeptide signature appears at 465-475 (ECTGLAWEWWR).

Belongs to the cholesterol-dependent cytolysin family. As to quaternary structure, homooligomeric pore complex of 35 to 50 subunits; when inserted in the host membrane.

It localises to the secreted. The protein localises to the host cell membrane. Its function is as follows. A cholesterol-dependent toxin with hemolytic activity against host red blood cells. Causes cytolysis by forming pores in cholesterol containing host membranes. binding to target membranes, the protein undergoes a major conformation change, leading to its insertion in the host membrane and formation of an oligomeric pore complex. Cholesterol is required for binding to host membranes, membrane insertion and pore formation; cholesterol binding is mediated by a Thr-Leu pair in the C-terminus. Can be reversibly inactivated by oxidation. The sequence is that of Hemolysin from Bacillus cereus.